We begin with the raw amino-acid sequence, 436 residues long: Nicotinate phosphoribosyltransferase (436 aa).

The residue at position 231 (His231) is a Phosphohistidine; by autocatalysis.

This sequence belongs to the NAPRTase family. In terms of processing, transiently phosphorylated on a His residue during the reaction cycle. Phosphorylation strongly increases the affinity for substrates and increases the rate of nicotinate D-ribonucleotide production. Dephosphorylation regenerates the low-affinity form of the enzyme, leading to product release.

It catalyses the reaction nicotinate + 5-phospho-alpha-D-ribose 1-diphosphate + ATP + H2O = nicotinate beta-D-ribonucleotide + ADP + phosphate + diphosphate. Its pathway is cofactor biosynthesis; NAD(+) biosynthesis; nicotinate D-ribonucleotide from nicotinate: step 1/1. In terms of biological role, catalyzes the synthesis of beta-nicotinate D-ribonucleotide from nicotinate and 5-phospho-D-ribose 1-phosphate at the expense of ATP. The protein is Nicotinate phosphoribosyltransferase of Vibrio parahaemolyticus serotype O3:K6 (strain RIMD 2210633).